The primary structure comprises 460 residues: Amino acid transporter AVT6A (460 aa).

Helical transmembrane passes span 45-65 (FSGA…MALP), 66-86 (ATMK…MAFL), 120-140 (ILLQ…YMII), 172-192 (AAIL…FKRI), 199-219 (SALS…ISIM), 238-258 (LTSF…FICH), 281-301 (ALML…LLFG), 336-356 (LMLV…GLLF), 371-391 (CLTA…PSIW), 394-414 (FQFT…ASII), and 427-447 (TTLA…AIYS).

The protein belongs to the amino acid/polyamine transporter 2 family. Amino acid/auxin permease (AAAP) (TC 2.A.18.6) subfamily.

Its subcellular location is the membrane. The sequence is that of Amino acid transporter AVT6A from Arabidopsis thaliana (Mouse-ear cress).